The following is a 683-amino-acid chain: Eukaryotic translation initiation factor 3 subunit B (683 aa).

The interval 1-25 (MAKKKGEEQDFEEEPNFDDPEGFVD) is disordered. The span at 9 to 25 (QDFEEEPNFDDPEGFVD) shows a compositional bias: acidic residues. An RRM domain is found at 49–133 (NVIVVDNIPV…YTLLVNRFAD (85 aa)). WD repeat units lie at residues 199 to 238 (KRERFTDTYVKWSPKGTYIVTFHKQGVVVWGGSSFVKVNK), 240 to 279 (AHSNAQFVDISPCEQYLVTYGPNGQKIVIWDIRTGAEKRT), 283 to 321 (DGMSNASMLRWSHDDRYVARLVDSQIQIYDTTTFFLLDM), 324 to 359 (IRVEGIRNFSWSPTDNIIAYWVAEEVDVPAKVTLMA), 435 to 477 (EVKE…EPVL), and 522 to 567 (GDHY…KRVN). Residues 611–638 (MTRASKELIEKRAKLREQFTEYRSKRVK) are a coiled coil.

It belongs to the eIF-3 subunit B family. As to quaternary structure, component of the eukaryotic translation initiation factor 3 (eIF-3) complex.

It localises to the cytoplasm. RNA-binding component of the eukaryotic translation initiation factor 3 (eIF-3) complex, which is involved in protein synthesis of a specialized repertoire of mRNAs and, together with other initiation factors, stimulates binding of mRNA and methionyl-tRNAi to the 40S ribosome. The eIF-3 complex specifically targets and initiates translation of a subset of mRNAs involved in cell proliferation. This chain is Eukaryotic translation initiation factor 3 subunit B, found in Anopheles gambiae (African malaria mosquito).